Consider the following 62-residue polypeptide: Large ribosomal subunit protein uL30 (62 aa).

Belongs to the universal ribosomal protein uL30 family. As to quaternary structure, part of the 50S ribosomal subunit.

The polypeptide is Large ribosomal subunit protein uL30 (Paracoccus denitrificans (strain Pd 1222)).